Reading from the N-terminus, the 282-residue chain is Proteasome subunit beta (282 aa).

A propeptide spans 1-54 (MGSHRDLPAGMVNHIFTNSGISSFTEFVGSYAPDLLPGRNETLAAPVGDRIPHA) (removed in mature form; by autocatalysis). Thr55 functions as the Nucleophile in the catalytic mechanism.

The protein belongs to the peptidase T1B family. In terms of assembly, the 20S proteasome core is composed of 14 alpha and 14 beta subunits that assemble into four stacked heptameric rings, resulting in a barrel-shaped structure. The two inner rings, each composed of seven catalytic beta subunits, are sandwiched by two outer rings, each composed of seven alpha subunits. The catalytic chamber with the active sites is on the inside of the barrel. Has a gated structure, the ends of the cylinder being occluded by the N-termini of the alpha-subunits. Is capped by the proteasome-associated ATPase, ARC.

The protein resides in the cytoplasm. The enzyme catalyses Cleavage of peptide bonds with very broad specificity.. It functions in the pathway protein degradation; proteasomal Pup-dependent pathway. The formation of the proteasomal ATPase ARC-20S proteasome complex, likely via the docking of the C-termini of ARC into the intersubunit pockets in the alpha-rings, may trigger opening of the gate for substrate entry. Interconversion between the open-gate and close-gate conformations leads to a dynamic regulation of the 20S proteasome proteolysis activity. Component of the proteasome core, a large protease complex with broad specificity involved in protein degradation. This chain is Proteasome subunit beta, found in Streptosporangium roseum (strain ATCC 12428 / DSM 43021 / JCM 3005 / KCTC 9067 / NCIMB 10171 / NRRL 2505 / NI 9100).